Reading from the N-terminus, the 206-residue chain is MKIILATSNKDKVKEIKAFYKNYEIYALNEIMQPFEIKETGSSFKENALIKVNAVYKKLEEMKLENEFMALSDDSGICVDILGGAPGIYSARYSNDMVIHPTDESNRAKLISKLHKKNVKTSPAHYTACIALSCKSGNFTTHGFMHGRVIDEERGNNGFGYDFMFIANGFSKTIGELDENTKLKISHRSKGLFLMSKILKILNRSF.

Residue threonine 7–lysine 12 coordinates substrate. Aspartate 74 acts as the Proton acceptor in catalysis. Aspartate 74 provides a ligand contact to Mg(2+). Substrate is bound by residues serine 75, phenylalanine 159 to aspartate 162, lysine 182, and histidine 187 to arginine 188.

It belongs to the HAM1 NTPase family. In terms of assembly, homodimer. The cofactor is Mg(2+).

It carries out the reaction XTP + H2O = XMP + diphosphate + H(+). It catalyses the reaction dITP + H2O = dIMP + diphosphate + H(+). The catalysed reaction is ITP + H2O = IMP + diphosphate + H(+). Functionally, pyrophosphatase that catalyzes the hydrolysis of nucleoside triphosphates to their monophosphate derivatives, with a high preference for the non-canonical purine nucleotides XTP (xanthosine triphosphate), dITP (deoxyinosine triphosphate) and ITP. Seems to function as a house-cleaning enzyme that removes non-canonical purine nucleotides from the nucleotide pool, thus preventing their incorporation into DNA/RNA and avoiding chromosomal lesions. This chain is dITP/XTP pyrophosphatase, found in Campylobacter hominis (strain ATCC BAA-381 / DSM 21671 / CCUG 45161 / LMG 19568 / NCTC 13146 / CH001A).